The chain runs to 390 residues: NADH-quinone oxidoreductase subunit D (390 aa).

It belongs to the complex I 49 kDa subunit family. As to quaternary structure, NDH-1 is composed of 14 different subunits. Subunits NuoB, C, D, E, F, and G constitute the peripheral sector of the complex.

Its subcellular location is the cell membrane. It carries out the reaction a quinone + NADH + 5 H(+)(in) = a quinol + NAD(+) + 4 H(+)(out). NDH-1 shuttles electrons from NADH, via FMN and iron-sulfur (Fe-S) centers, to quinones in the respiratory chain. The immediate electron acceptor for the enzyme in this species is believed to be ubiquinone. Couples the redox reaction to proton translocation (for every two electrons transferred, four hydrogen ions are translocated across the cytoplasmic membrane), and thus conserves the redox energy in a proton gradient. In Wolbachia sp. subsp. Brugia malayi (strain TRS), this protein is NADH-quinone oxidoreductase subunit D.